A 362-amino-acid polypeptide reads, in one-letter code: MTILHEEINFLKKDELNINLKCLDKKERYKIWRRIPKCELHCHLDLCFSLEFFLKCVRKYNLQPDLTDDEVVDYYLFKDKGKSLNEFIERSRRVTDIFINYDIIKDIAKNAVFNKYKEGVILIEFRYSPSYIAYKYNLCIDLIHKTIVEGINEAVEKLNHKIHVGLICIGETGISEESLRKAAEFCVKNKKDFVGFDHAGHERDLKPYKEIYDYVRENGIPLTIHAGEDLTLPNLNTIYSAIEVLKAKRIGHGIRVIESEDLINLIKKNDILLEICPISNLLLNNVKSMDTHPIKKLYDSGIKVSVNTDDPGMFLTEINDEYEELYLNLNFNLEDFMKMNLWALEKSFVKSEIKDKLKKLYF.

Zn(2+) is bound by residues His41 and His43. 43–45 (HLD) serves as a coordination point for a purine D-ribonucleoside. Positions 169–183 (IGETGISEESLRKAA) are gating helix loop; regulates binding affinity for substrates and thus substrate selectivity. Gly200 contacts a purine D-ribonucleoside. Zn(2+) is bound at residue His225. A purine D-ribonucleoside is bound by residues Glu228, His252, and Asp309. Asp309 is a Zn(2+) binding site.

Belongs to the metallo-dependent hydrolases superfamily. Adenosine and AMP deaminases family. Requires Zn(2+) as cofactor.

The enzyme catalyses adenosine + H2O + H(+) = inosine + NH4(+). It participates in purine metabolism; purine nucleoside salvage. Inhibited by coformycin but not by methylthiocoformycin (MT-coformycin). In terms of biological role, catalyzes the hydrolytic deamination of adenosine to produce inosine. Unlike other Plasmodium adenosine deaminases, does not catalyze the deamination of 5'-methylthioadenosine (MTA). Plays an essential role in the purine salvage pathway which allows the parasite to use host cell purines for the synthesis of nucleic acids. The protein is Adenosine deaminase of Plasmodium gallinaceum.